Reading from the N-terminus, the 192-residue chain is Fe/S biogenesis protein NfuA (192 aa).

Positions 149 and 152 each coordinate [4Fe-4S] cluster.

The protein belongs to the NfuA family. Homodimer. [4Fe-4S] cluster serves as cofactor.

In terms of biological role, involved in iron-sulfur cluster biogenesis. Binds a 4Fe-4S cluster, can transfer this cluster to apoproteins, and thereby intervenes in the maturation of Fe/S proteins. Could also act as a scaffold/chaperone for damaged Fe/S proteins. In Shewanella sp. (strain MR-7), this protein is Fe/S biogenesis protein NfuA.